A 403-amino-acid polypeptide reads, in one-letter code: S-adenosylmethionine synthase (403 aa).

H16 contacts ATP. D18 lines the Mg(2+) pocket. E44 lines the K(+) pocket. Residues E57 and Q100 each coordinate L-methionine. A flexible loop region spans residues 100–110 (QSPDIAQGVDR). Residues 106 to 126 (QGVDRSYESRSGSASTDAHDL) form a disordered region. ATP-binding positions include 176–178 (DGK), 248–249 (KF), D257, 263–264 (RK), A280, and K284. Residue D257 coordinates L-methionine. An L-methionine-binding site is contributed by K288.

It belongs to the AdoMet synthase family. As to quaternary structure, homotetramer; dimer of dimers. Requires Mg(2+) as cofactor. K(+) is required as a cofactor.

It is found in the cytoplasm. It catalyses the reaction L-methionine + ATP + H2O = S-adenosyl-L-methionine + phosphate + diphosphate. The protein operates within amino-acid biosynthesis; S-adenosyl-L-methionine biosynthesis; S-adenosyl-L-methionine from L-methionine: step 1/1. Catalyzes the formation of S-adenosylmethionine (AdoMet) from methionine and ATP. The overall synthetic reaction is composed of two sequential steps, AdoMet formation and the subsequent tripolyphosphate hydrolysis which occurs prior to release of AdoMet from the enzyme. The sequence is that of S-adenosylmethionine synthase from Clavibacter sepedonicus (Clavibacter michiganensis subsp. sepedonicus).